We begin with the raw amino-acid sequence, 439 residues long: MQQFYCVKEVLNERLKRGYEFAVKNEYIEEKVTEKLQGIAATARMDGFRKGKVSPEFVRRMYGESIAGEVVAQVIDDISSKFLKEGDFGGIVTSGVEIKAYPKVCSNSEGDGGLVYELKFEVMPEVPVVDIDGITLKEIEVNISQEDVDEFLEDLKANYPSFVDVDDESRGVSDGDRVTISYRSAFKGKALRGGSAQGFTFVLGKGQLLEQFERQIVGMKKGESKEFKLEFPLDYMAKHFAGKEVDMHVTVERLSVKDEINDRETLASKCGFGSVEDMVKFATDGLNRRFADMGSVVAQRELLEHLDASYSVDVPEYIVAQELGRMRRELEEGDLNDAEALTKEAEQRVKLGMLLMKVATDAGVAVEVNDILSFIRVNYSAYGRSMEDVLKLFKNREDFREHVKGKVLEDKVVRYIISRAKKDRQSMSAGELKSLFESV.

In terms of domain architecture, PPIase FKBP-type spans glycine 175–isoleucine 260.

This sequence belongs to the FKBP-type PPIase family. Tig subfamily.

Its subcellular location is the cytoplasm. The catalysed reaction is [protein]-peptidylproline (omega=180) = [protein]-peptidylproline (omega=0). Its function is as follows. Involved in protein export. Acts as a chaperone by maintaining the newly synthesized protein in an open conformation. Functions as a peptidyl-prolyl cis-trans isomerase. The polypeptide is Trigger factor (Anaplasma phagocytophilum (strain HZ)).